A 108-amino-acid chain; its full sequence is Precursor of CEP16 (108 aa).

The first 27 residues, M1 to A27, serve as a signal peptide directing secretion. A propeptide spanning residues I28–K92 is cleaved from the precursor. N50 and N98 each carry an N-linked (GlcNAc...) asparagine glycan. Positions Q76 to H108 are disordered. P102 and P104 each carry hydroxyproline.

It belongs to the C-terminally encoded plant signaling peptide (CEP) family. As to quaternary structure, interacts with CEP receptors (e.g. CEPR1 and CEPR2). In terms of processing, the mature small signaling peptide is generated by proteolytic processing of the longer precursor.

It localises to the secreted. The protein resides in the extracellular space. The protein localises to the apoplast. Functionally, extracellular signaling peptide that may regulate primary root growth rate and systemic nitrogen (N)-demand signaling. This is Precursor of CEP16 from Arabidopsis thaliana (Mouse-ear cress).